Here is a 1358-residue protein sequence, read N- to C-terminus: MAPPETGDELVFFVNGKKVVEKDVDPETTLLTYLRRKLGLCGTKLGCGEGGCGACTVMISKYDPFQKKILHHTANACLFPICALHHVAVTTVEGIGNTKSRLHPAQERIAKSHGSQCGFCTPGIVMSMYTLLRNKPKPKMEDIEDAFQGNLCRCTGYRPILEGYRTFAVDSNCCGKAANGTGCCHSKGENSMNGGCCGGKANGPGCCMNEKENVTMMSSSLFDSSEFQPLDPTQEPIFPPELMTQRNKEQKQVCFKGERVMWIQPTTLQELVALKSQYPNAKLVVGNTEVGIEMRLKNMLYPVILAPAWIPEMNAVQQTETGITFGAACTLSSVEEVLRKAVAELPSYKTEIFQAALEQLRWFAGPQIRNVAALGGNIMTASPISDLNPVLMASGSKLTLISMEGKRTVMMDEKFFTGYRKTIVKPEEVLLSVEIPYSKEGEYFSAFKQAYRREDDIAIVTCGMRVLFQHGTSRVQEVKLSYGGMAPTTILALKTCRELAGRDWNEKLLQDACRLLAGEMDLSPSAPGGMVEFRRTLTLSFFFKFYLTVLQKLSKDQNGPNNLCEPVPPNYISATELFHKDPIASTQLFQEVPRGQLVEDTVGRPLVHLSAAKQACGEAVYCDDIPHYENELYLTLVTSTQAHAKILSIDASEAQSVPGFVCFVSAKDVPGSNITGIANDETVFAEDVVTCVGHIIGAVIADTQEHSRRAAKAVKIKYEELKPIVTIQEAIEQQSFIKPIKRIKKGDVNKGFEESDHILEGEMHIGGQEHFYLETHCTLAVPKGEDGEMELFVSTQNLMKTQEFTASALGVPSNRIVVRVKRMGGGFGGKETRNTILTTVVAVAAFKTGRPVRCMLDRDEDMLISGGRHPFLGRYKVGFMKNGKIKSLEVSYYSNGGNSADLSHGVMDRALLHLDNSYNIPNVSIMGFICKTNLSSNTAFRGFGGPQGMMIAECWMSDLARKCGLPPEEVRKINLYHEGDLTHFNQKLEGFTLRRCWDECLSSSNYHARKKLIEEFNKQNRWKKRGMCIIPTKFGISFTVPFLNQAGALVHVYTDGSVLLTHGGTEMGQGLHTKMIQVASRSLGIPTSKIYISETSTNTVPNTSPTAASVSADINGMAVHNACQTILKRLEPIKQSNLKGSWEDWIKTAYENCISLSATGFYRIPDVGYNFETNKGKPFHYFSYGVACSEVEIDCLTGDHKNIRTDIVMDVGTSLNPAIDIGQIEGAFVQGIGLFTMEELRYSPEGNLYTRGPGMYKIPAFGDIPTEFYVSLLRDCPNSKAIYSSKAVGEPPLFLSASVFYAIKDAIYSAREDSGVTEPFRLDSPATPERIRNACVDTFTKMCPSAEPGTFKPWSVRA.

Residues 8–95 (DELVFFVNGK…HVAVTTVEGI (88 aa)) form the 2Fe-2S ferredoxin-type domain. [2Fe-2S] cluster contacts are provided by cysteine 47, cysteine 52, cysteine 55, cysteine 77, cysteine 117, cysteine 120, cysteine 152, and cysteine 154. In terms of domain architecture, FAD-binding PCMH-type spans 255–440 (FKGERVMWIQ…LSVEIPYSKE (186 aa)). FAD-binding positions include 283-290 (LVVGNTEV), phenylalanine 363, 373-377 (ALGGN), aspartate 386, leucine 430, and lysine 448. Positions 796 and 827 each coordinate Mo-molybdopterin. Substrate-binding residues include glutamate 831 and arginine 909. Arginine 941 is a Mo-molybdopterin binding site. Residues phenylalanine 943 and threonine 1039 each coordinate substrate. Residue alanine 1108 participates in Mo-molybdopterin binding. Glutamate 1290 functions as the Proton acceptor in the catalytic mechanism.

This sequence belongs to the xanthine dehydrogenase family. Homodimer. FAD is required as a cofactor. It depends on Mo-molybdopterin as a cofactor. The cofactor is [2Fe-2S] cluster. In terms of tissue distribution, detected in liver (at protein level).

Its subcellular location is the peroxisome. The protein resides in the cytoplasm. The enzyme catalyses xanthine + NAD(+) + H2O = urate + NADH + H(+). It carries out the reaction hypoxanthine + NAD(+) + H2O = xanthine + NADH + H(+). It catalyses the reaction xanthine + O2 + H2O = urate + H2O2. Key enzyme in purine degradation. Catalyzes the oxidation of hypoxanthine to xanthine. Catalyzes the oxidation of xanthine to uric acid. Contributes to the generation of reactive oxygen species. The protein is Xanthine dehydrogenase/oxidase (XDH) of Gallus gallus (Chicken).